The following is a 715-amino-acid chain: ATP-dependent DNA helicase Hel308 (715 aa).

The Q motif signature appears at M1 to A29. ATP-binding positions include Q28 and I46–T53. A Helicase ATP-binding domain is found at T33 to D197. Positions D145 to H148 match the DEAH box motif. A Helicase C-terminal domain is found at L229–I422.

The protein belongs to the helicase family. Hel308 subfamily. Monomer.

It catalyses the reaction Couples ATP hydrolysis with the unwinding of duplex DNA by translocating in the 3'-5' direction.. It carries out the reaction ATP + H2O = ADP + phosphate + H(+). Its function is as follows. DNA-dependent ATPase and 3'-5' DNA helicase that may be involved in repair of stalled replication forks. This is ATP-dependent DNA helicase Hel308 from Pyrococcus horikoshii (strain ATCC 700860 / DSM 12428 / JCM 9974 / NBRC 100139 / OT-3).